The chain runs to 196 residues: uncharacterized protein (196 aa).

It localises to the mitochondrion. This is an uncharacterized protein from Paramecium tetraurelia.